The chain runs to 497 residues: Probable FAD-binding monooxygenase AlmA (497 aa).

Residues 4-24 (QVDVLIIGAGISGIGLAVHLS) form a helical membrane-spanning segment. The FAD site is built by Ser-15, Glu-36, Asp-56, Phe-62, and Val-104. Residue 54–56 (RSD) participates in NADP(+) binding. Residues 184–190 (SGATAIT), 208–209 (RS), and 292–293 (RL) each bind NADP(+). Residue Val-395 coordinates FAD.

Belongs to the FAD-binding monooxygenase family. FAD is required as a cofactor.

The protein localises to the cell membrane. The protein operates within hydrocarbon metabolism; alkane degradation. Functionally, is involved in the degradation of n-alkanes with C chain lengths of 32 and longer. Allows Acinetobacter sp. strain DSM 17874 to grow on long-chain n-alkanes such as dotriacontane (C32H66) or hexatriacontane (C36H74) as a sole carbon source. This is Probable FAD-binding monooxygenase AlmA from Acinetobacter sp.